The sequence spans 1002 residues: MEDGHSKTVEQSLNFFGTDGERGLTLDQIKTNQAKYGPNELPTEEGKSIWQLVLEQFDDLLVKILLLAAIISFVLALFEEHEETFTAFVEPLVILLILIANAVVGVWQERNAESAIEALKEYEPEMGKVIRQDKSGIQKVRAKEIVPGDLVEVSVGDKIPADIRLTHIYSTTIRIDQSILTGESVSVIKHTDAIPDPRAVNQDKKNILFSGTNVAAGKARGVVIGTGLSTAIGKIRTEMSETEEIKTPLQQKLDEFGEQLSKVISVICVAVWAINIGHFNDPAHGGSWIKGAIYYFKIAVALAVAAIPEGLPAVITTCLALGTRRMAKKNAIVRSLPSVETLGCTSVICSDKTGTLTTNQMSVSRMLIFEKVEGNDSSFLEFELTGSTYEPIGELFLGGQRVKASDYEALQELATVCIMCNDSAIDYNEFKAAFEKVGEATETALIVLAEKLNAFSVNKSGLDRRSNAIAARGEIETKWKKEFTLEFSRDRKSMSSYCTPLKASRLGTGPKLFVKGAPEGVLDRCTHARVGTSKVPLTSALKAKILALTGQYGTGRDTLRCLALAVADSPIRPEDMDLGDSTKFYQYEVNLTFVGVVGMLDPPRKEVFDAIVRCRAAGIRVIVITGDNKATAEAICRRIGVFTEEEDTTGKSYSGREFDDLSIAEQKAAVARSRLFSRVEPQHKSKIVEYLQGMNEISAMTGDGVNDAPALKKAEIGIAMGSGTAVAKSAAEMVLADDNFSSIVSAVEEGRAIYNNMKQFIRYLISSNIGEVVSIFLTAALGLPEALIPVQLLWVNLVTDGLPATALGFNPPDLDIMDKPPRKADEGLISGWLFFRYMAIGFYVGAATVGAAAWWFIASSEGPGLTYWQLTHHLSCLGGGDEFKGVDCKIFSDPKAMTMALSVLVTIEMLNAMNSLSENQSLISMPPWCNLWLIGSMALSFTLHFVILYVDVLSTVFQVTPLSAEEWITVMKFSIPVVLLDETLKFVARKIADVPDAVVDKW.

Over 1 to 48 the chain is Cytoplasmic; sequence MEDGHSKTVEQSLNFFGTDGERGLTLDQIKTNQAKYGPNELPTEEGKS. Residues 49 to 69 traverse the membrane as a helical segment; sequence IWQLVLEQFDDLLVKILLLAA. Residues 70-89 lie on the Lumenal side of the membrane; that stretch reads IISFVLALFEEHEETFTAFV. A helical membrane pass occupies residues 90–110; the sequence is EPLVILLILIANAVVGVWQER. Topologically, residues 111–253 are cytoplasmic; the sequence is NAESAIEALK…EIKTPLQQKL (143 aa). Residues 254 to 273 form a helical membrane-spanning segment; it reads DEFGEQLSKVISVICVAVWA. The Lumenal portion of the chain corresponds to 274 to 295; it reads INIGHFNDPAHGGSWIKGAIYY. A helical transmembrane segment spans residues 296 to 313; the sequence is FKIAVALAVAAIPEGLPA. Ca(2+)-binding residues include V304, A305, I307, and E309. Residues 314–757 are Cytoplasmic-facing; sequence VITTCLALGT…EEGRAIYNNM (444 aa). The active-site 4-aspartylphosphate intermediate is the D351. D703 and D707 together coordinate Mg(2+). The helical transmembrane segment at 758–777 threads the bilayer; it reads KQFIRYLISSNIGEVVSIFL. N768 and E771 together coordinate Ca(2+). Residues 778 to 787 lie on the Lumenal side of the membrane; the sequence is TAALGLPEAL. The helical transmembrane segment at 788–808 threads the bilayer; that stretch reads IPVQLLWVNLVTDGLPATALG. N796, T799, and D800 together coordinate Ca(2+). At 809-828 the chain is on the cytoplasmic side; that stretch reads FNPPDLDIMDKPPRKADEGL. A helical transmembrane segment spans residues 829–851; that stretch reads ISGWLFFRYMAIGFYVGAATVGA. Topologically, residues 852–897 are lumenal; the sequence is AAWWFIASSEGPGLTYWQLTHHLSCLGGGDEFKGVDCKIFSDPKAM. Residues 898-917 form a helical membrane-spanning segment; that stretch reads TMALSVLVTIEMLNAMNSLS. E908 lines the Ca(2+) pocket. At 918-930 the chain is on the cytoplasmic side; that stretch reads ENQSLISMPPWCN. The helical transmembrane segment at 931–949 threads the bilayer; it reads LWLIGSMALSFTLHFVILY. The Lumenal portion of the chain corresponds to 950–964; sequence VDVLSTVFQVTPLSA. The helical transmembrane segment at 965–985 threads the bilayer; the sequence is EEWITVMKFSIPVVLLDETLK. Over 986–1002 the chain is Cytoplasmic; it reads FVARKIADVPDAVVDKW.

Belongs to the cation transport ATPase (P-type) (TC 3.A.3) family.

The protein resides in the endoplasmic reticulum membrane. It localises to the sarcoplasmic reticulum membrane. The enzyme catalyses Ca(2+)(in) + ATP + H2O = Ca(2+)(out) + ADP + phosphate + H(+). Functionally, this magnesium-dependent enzyme catalyzes the hydrolysis of ATP coupled with the transport of calcium. The sequence is that of Calcium-transporting ATPase sarcoplasmic/endoplasmic reticulum type from Drosophila pseudoobscura pseudoobscura (Fruit fly).